A 216-amino-acid chain; its full sequence is Peptide methionine sulfoxide reductase MsrA (216 aa).

Cys54 is a catalytic residue.

The protein belongs to the MsrA Met sulfoxide reductase family.

It carries out the reaction L-methionyl-[protein] + [thioredoxin]-disulfide + H2O = L-methionyl-(S)-S-oxide-[protein] + [thioredoxin]-dithiol. The catalysed reaction is [thioredoxin]-disulfide + L-methionine + H2O = L-methionine (S)-S-oxide + [thioredoxin]-dithiol. Functionally, has an important function as a repair enzyme for proteins that have been inactivated by oxidation. Catalyzes the reversible oxidation-reduction of methionine sulfoxide in proteins to methionine. This is Peptide methionine sulfoxide reductase MsrA from Xylella fastidiosa (strain M12).